A 388-amino-acid chain; its full sequence is 3-amino-5-hydroxybenzoate synthase (388 aa).

Lys-188 bears the N6-(pyridoxal phosphate)lysine mark.

The protein belongs to the degT/dnrJ/eryC1 family. Homodimer. Can interact with RifL. The cofactor is pyridoxal 5'-phosphate.

It carries out the reaction 5-deoxy-5-amino-3-dehydroshikimate = 3-amino-5-hydroxybenzoate + H2O + H(+). The catalysed reaction is UDP-3-oxo-alpha-D-glucose + L-glutamine = UDP-alpha-D-kanosamine + 2-oxoglutaramate. It functions in the pathway antibiotic biosynthesis; rifamycin B biosynthesis. Its activity is regulated as follows. AHBA synthase activity is activated by 3-deoxy-D-arabinoheptulosonic acid 7-phosphate (DAHP), an intermediate in the shikimate pathway, and is irreversibly inhibited by gabaculine (5-amino-1,3-cyclohexadiene-1-carboxylate). Functionally, catalyzes the dehydration and aromatization of 5-amino-5-deoxy-3-dehydroshikimate (aminoDHS) to 3-amino-5-hydroxybenzoate (AHBA), a compound that then serves as the starter unit for the assembly of a polyketide during the biosynthesis of rifamycin B and other ansamycin antibiotics. Cannot utilize 5-deoxy-5-amino-3-dehydroquinate (aminoDHQ), 5-deoxy-5-aminoshikimate (aminoSA), quinate, 3-dehydroquinate, or 3-dehydroshikimate (DHS) as substrate. Its function is as follows. In a complex with RifL, RifK may have a second function in the AHBA pathway, acting as a transaminase introducing the nitrogen into the first pathway intermediate, UDP-3-keto-D-glucose, to give UDP-kanosamine. Appears to use glutamine as the nitrogen donor; NH(4)(+) or asparagine are 30% less effective as nitrogen donors and neither glutamate nor aspartate show activity. The protein is 3-amino-5-hydroxybenzoate synthase (rifK) of Amycolatopsis mediterranei (strain S699) (Nocardia mediterranei).